The chain runs to 92 residues: Small ribosomal subunit protein uS19 (92 aa).

Belongs to the universal ribosomal protein uS19 family.

In terms of biological role, protein S19 forms a complex with S13 that binds strongly to the 16S ribosomal RNA. The polypeptide is Small ribosomal subunit protein uS19 (Bacillus licheniformis (strain ATCC 14580 / DSM 13 / JCM 2505 / CCUG 7422 / NBRC 12200 / NCIMB 9375 / NCTC 10341 / NRRL NRS-1264 / Gibson 46)).